A 532-amino-acid polypeptide reads, in one-letter code: tRNA-2-methylthio-N(6)-dimethylallyladenosine synthase (532 aa).

Residues 1-21 (MTSTVAHGAGSAGPADDVEPM) are disordered. The MTTase N-terminal domain maps to 24–140 (RTYQVRTYGC…LPALLDRARH (117 aa)). [4Fe-4S] cluster is bound by residues C33, C69, C103, C177, C181, and C184. Residues 163 to 399 (RESAYAAWVS…VELQEQISLE (237 aa)) form the Radical SAM core domain. The TRAM domain maps to 402–470 (RAIVGQRVEL…PHHLIADGGI (69 aa)). The disordered stretch occupies residues 510-532 (TSCGSAGGCGSADGAGSSAGDPQ). The span at 523–532 (GAGSSAGDPQ) shows a compositional bias: low complexity.

The protein belongs to the methylthiotransferase family. MiaB subfamily. As to quaternary structure, monomer. The cofactor is [4Fe-4S] cluster.

It is found in the cytoplasm. The catalysed reaction is N(6)-dimethylallyladenosine(37) in tRNA + (sulfur carrier)-SH + AH2 + 2 S-adenosyl-L-methionine = 2-methylsulfanyl-N(6)-dimethylallyladenosine(37) in tRNA + (sulfur carrier)-H + 5'-deoxyadenosine + L-methionine + A + S-adenosyl-L-homocysteine + 2 H(+). Its function is as follows. Catalyzes the methylthiolation of N6-(dimethylallyl)adenosine (i(6)A), leading to the formation of 2-methylthio-N6-(dimethylallyl)adenosine (ms(2)i(6)A) at position 37 in tRNAs that read codons beginning with uridine. The sequence is that of tRNA-2-methylthio-N(6)-dimethylallyladenosine synthase from Mycobacterium ulcerans (strain Agy99).